Consider the following 399-residue polypeptide: Multi-drug resistance efflux pump PmrA (399 aa).

10 consecutive transmembrane segments (helical) span residues 12 to 34 (IAWF…MPIF), 49 to 71 (AGLA…GILA), 84 to 106 (GLAM…LIFL), 140 to 162 (LSTG…AELF), 167 to 186 (VFLL…ICFI), 217 to 239 (LFLT…ALYV), 248 to 270 (LLFV…AGVM), 306 to 328 (LGLY…NALL), 340 to 362 (VFAF…GSAV), and 366 to 388 (FGYH…FNLI).

Belongs to the major facilitator superfamily. TCR/Tet family.

Its subcellular location is the cell membrane. Efflux pump for various substrates. This Streptococcus pneumoniae serotype 4 (strain ATCC BAA-334 / TIGR4) protein is Multi-drug resistance efflux pump PmrA (pmrA).